We begin with the raw amino-acid sequence, 94 residues long: Small ribosomal subunit protein uS19 (94 aa).

This sequence belongs to the universal ribosomal protein uS19 family.

Its function is as follows. Protein S19 forms a complex with S13 that binds strongly to the 16S ribosomal RNA. The protein is Small ribosomal subunit protein uS19 of Anaplasma phagocytophilum (strain HZ).